Consider the following 444-residue polypeptide: Enolase (444 aa).

Substrate-binding residues include His163 and Glu172. Glu215 acts as the Proton donor in catalysis. The Mg(2+) site is built by Asp250, Glu300, and Asp327. The substrate site is built by Glu300 and Asp327. The active-site Proton acceptor is Lys352. Substrate-binding positions include 379–382 and Lys403; that span reads SHRS.

Belongs to the enolase family. As to quaternary structure, homodimer. The cofactor is Mg(2+).

The protein localises to the cytoplasm. The catalysed reaction is (2R)-2-phosphoglycerate = phosphoenolpyruvate + H2O. It participates in carbohydrate degradation; glycolysis; pyruvate from D-glyceraldehyde 3-phosphate: step 4/5. In Mesembryanthemum crystallinum (Common ice plant), this protein is Enolase (PGH1).